The chain runs to 222 residues: ATP-dependent dethiobiotin synthetase BioD 2 (222 aa).

Thr-17 provides a ligand contact to Mg(2+). Lys-38 is a catalytic residue. Substrate is bound at residue Thr-42. 2 residues coordinate Mg(2+): Asp-55 and Glu-112. ATP is bound by residues Asp-55, Glu-112–Gly-115, Asn-172–Arg-173, Pro-201–Leu-203, and Glu-208.

Belongs to the dethiobiotin synthetase family. In terms of assembly, homodimer. Mg(2+) serves as cofactor.

It is found in the cytoplasm. It carries out the reaction (7R,8S)-7,8-diammoniononanoate + CO2 + ATP = (4R,5S)-dethiobiotin + ADP + phosphate + 3 H(+). It functions in the pathway cofactor biosynthesis; biotin biosynthesis; biotin from 7,8-diaminononanoate: step 1/2. Catalyzes a mechanistically unusual reaction, the ATP-dependent insertion of CO2 between the N7 and N8 nitrogen atoms of 7,8-diaminopelargonic acid (DAPA, also called 7,8-diammoniononanoate) to form a ureido ring. This is ATP-dependent dethiobiotin synthetase BioD 2 from Yersinia pestis.